Consider the following 176-residue polypeptide: Small ribosomal subunit protein uS5 (176 aa).

An S5 DRBM domain is found at 11–74 (LSEVLVDVNR…QAAKKRMMKV (64 aa)).

The protein belongs to the universal ribosomal protein uS5 family. As to quaternary structure, part of the 30S ribosomal subunit. Contacts proteins S4 and S8.

Functionally, with S4 and S12 plays an important role in translational accuracy. In terms of biological role, located at the back of the 30S subunit body where it stabilizes the conformation of the head with respect to the body. The chain is Small ribosomal subunit protein uS5 from Rickettsia conorii (strain ATCC VR-613 / Malish 7).